A 384-amino-acid polypeptide reads, in one-letter code: Galactokinase (384 aa).

34–37 contributes to the substrate binding site; that stretch reads EHTD. An ATP-binding site is contributed by 123–129; the sequence is SSGLSSS. Mg(2+) contacts are provided by S129 and E161. Residue D173 is the Proton acceptor of the active site. Y222 provides a ligand contact to substrate.

This sequence belongs to the GHMP kinase family. GalK subfamily.

It is found in the cytoplasm. The enzyme catalyses alpha-D-galactose + ATP = alpha-D-galactose 1-phosphate + ADP + H(+). It participates in carbohydrate metabolism; galactose metabolism. Functionally, catalyzes the transfer of the gamma-phosphate of ATP to D-galactose to form alpha-D-galactose-1-phosphate (Gal-1-P). The protein is Galactokinase of Actinobacillus pleuropneumoniae serotype 3 (strain JL03).